Here is a 71-residue protein sequence, read N- to C-terminus: Delta-actitoxin-Avd2b 2 (71 aa).

Residues 1–20 (MNRLLVFLMLGAAFMLVVSA) form the signal peptide. A propeptide spanning residues 21–41 (NDAYGDEPAFKDLNQGDESLG) is cleaved from the precursor. Disulfide bonds link C46–C61, C47–C55, and C49–C66.

It belongs to the sea anemone short toxin (type III) family.

The protein resides in the secreted. It localises to the nematocyst. Voltage-gated sodium channel (Nav) inhibitor. 1 uM completely inhibits insect voltage-gated sodium channel inactivation (DmNav1 from D.melanogaster). This Anemonia viridis (Snakelocks anemone) protein is Delta-actitoxin-Avd2b 2.